Consider the following 408-residue polypeptide: Glutamate N-acetyltransferase (408 aa).

6 residues coordinate substrate: T150, K176, T189, E271, N403, and T408. T189 serves as the catalytic Nucleophile.

It belongs to the ArgJ family. Heterotetramer of two alpha and two beta chains.

It is found in the cytoplasm. The catalysed reaction is N(2)-acetyl-L-ornithine + L-glutamate = N-acetyl-L-glutamate + L-ornithine. It participates in amino-acid biosynthesis; L-arginine biosynthesis; L-ornithine and N-acetyl-L-glutamate from L-glutamate and N(2)-acetyl-L-ornithine (cyclic): step 1/1. Catalyzes the transfer of the acetyl group from N(2)-acetylornithine to glutamate, forming N-acetylglutamate and L-ornithine. The protein is Glutamate N-acetyltransferase of Methanococcus maripaludis (strain C5 / ATCC BAA-1333).